The sequence spans 659 residues: MENKGFELVSTYKPTGDQPRAIQELIEGLEQNKKSQVLLGVTGSGKTFTIANVIKAANRPVLLLSHNKTLASQLYSELKDFFPNNRVEYFVSYFDYYRPEAYMPNTDTYIDKTTKSNWDLEEMRMSTLNSISTKRDTIVVASVASIYGALKPKEYWSAFYNISIAQKISRKEFLLDLVQRGYKRNNVASEPGSFNAKGDFVDIIPAWTKGFHIRVEFFGDEIEKISTIDSNNKITIEKFKEYLIFPASAYTAPTGTIEAAVLRIREELHQRLEYFEKEGKLLEKQRLEDRTRNDLESLEEFGFCPGIENYSRHVDGRAEGEQPFTLFDYLPNDALLIIDESHMMIPQLNGMYNGDRARKLNLVNYGFRLPSALDNRPLQFHEFEKYEFQKIYISATPSDYEINQAHGEIVKQIIRPTGLLDPLIEIRREQNQVEDMFDEIQKQKAKKQRTLILATTKKVSEELTRYFQEKKEKVAYIHSDYTTFERNEILRKLRKGVYDTVIGINLLREGIDLPEVSLIMVLDANKESFFRSKKSLIQIVGRAARNVNGRVIFYANNISKSMEETIYDNLDKRKIQMDYNKKHNIIPKTIIKPITEAIEDKKLNESLISFMSHSKTKKSIKEKEALVKDLRNQMLDASKQLNFERAAELRDIILELEAN.

The region spanning 27 to 414 is the Helicase ATP-binding domain; sequence EGLEQNKKSQ…AHGEIVKQII (388 aa). An ATP-binding site is contributed by 40-47; it reads GVTGSGKT. The short motif at 93–116 is the Beta-hairpin element; that stretch reads YFDYYRPEAYMPNTDTYIDKTTKS. Residues 432 to 594 enclose the Helicase C-terminal domain; sequence QVEDMFDEIQ…IIPKTIIKPI (163 aa). Positions 624-659 constitute a UVR domain; it reads EALVKDLRNQMLDASKQLNFERAAELRDIILELEAN.

Belongs to the UvrB family. Forms a heterotetramer with UvrA during the search for lesions. Interacts with UvrC in an incision complex.

It localises to the cytoplasm. In terms of biological role, the UvrABC repair system catalyzes the recognition and processing of DNA lesions. A damage recognition complex composed of 2 UvrA and 2 UvrB subunits scans DNA for abnormalities. Upon binding of the UvrA(2)B(2) complex to a putative damaged site, the DNA wraps around one UvrB monomer. DNA wrap is dependent on ATP binding by UvrB and probably causes local melting of the DNA helix, facilitating insertion of UvrB beta-hairpin between the DNA strands. Then UvrB probes one DNA strand for the presence of a lesion. If a lesion is found the UvrA subunits dissociate and the UvrB-DNA preincision complex is formed. This complex is subsequently bound by UvrC and the second UvrB is released. If no lesion is found, the DNA wraps around the other UvrB subunit that will check the other stand for damage. This is UvrABC system protein B from Mycoplasma mobile (strain ATCC 43663 / 163K / NCTC 11711) (Mesomycoplasma mobile).